The sequence spans 130 residues: Fluoride-specific ion channel FluC (130 aa).

The next 4 helical transmembrane spans lie at 4-24 (MINVVAVGTGGFVGAASRYFI), 35-55 (GFPIATLIINILGSFLIGLLT), 68-88 (LNLFLTTGILGGFTTFSTFSL), and 99-119 (AVFGVVNIVLSIAFCLTGVVL). Positions 78 and 81 each coordinate Na(+).

The protein belongs to the fluoride channel Fluc/FEX (TC 1.A.43) family.

It is found in the cell membrane. The catalysed reaction is fluoride(in) = fluoride(out). Na(+) is not transported, but it plays an essential structural role and its presence is essential for fluoride channel function. Functionally, fluoride-specific ion channel. Important for reducing fluoride concentration in the cell, thus reducing its toxicity. The sequence is that of Fluoride-specific ion channel FluC from Ruminiclostridium cellulolyticum (strain ATCC 35319 / DSM 5812 / JCM 6584 / H10) (Clostridium cellulolyticum).